Here is a 624-residue protein sequence, read N- to C-terminus: Phosphomethylpyrimidine synthase (624 aa).

Residues Asn231, Met260, Tyr289, His325, 345 to 347 (SRG), 386 to 389 (DGLR), and Glu425 each bind substrate. His429 contributes to the Zn(2+) binding site. Tyr452 serves as a coordination point for substrate. His493 is a Zn(2+) binding site. Residues Cys573, Cys576, and Cys581 each coordinate [4Fe-4S] cluster.

Belongs to the ThiC family. Homodimer. [4Fe-4S] cluster serves as cofactor.

The enzyme catalyses 5-amino-1-(5-phospho-beta-D-ribosyl)imidazole + S-adenosyl-L-methionine = 4-amino-2-methyl-5-(phosphooxymethyl)pyrimidine + CO + 5'-deoxyadenosine + formate + L-methionine + 3 H(+). It functions in the pathway cofactor biosynthesis; thiamine diphosphate biosynthesis. Catalyzes the synthesis of the hydroxymethylpyrimidine phosphate (HMP-P) moiety of thiamine from aminoimidazole ribotide (AIR) in a radical S-adenosyl-L-methionine (SAM)-dependent reaction. This chain is Phosphomethylpyrimidine synthase, found in Myxococcus xanthus (strain DK1622).